The sequence spans 426 residues: Target of rapamycin complex 2 subunit AVO2 (426 aa).

ANK repeat units lie at residues 4 to 33, 39 to 68, 74 to 104, 108 to 137, and 141 to 171; these read EPSVRLREAIIEGNLLIVKRLLRRNPDLLT, NGWSSLHYASYHGRYLICVYLIQLGHDKHE, KGNTCVHLALMKGHEQTLHLLLQQFPRFINH, NGRAPIHIACMNDYYQCLSLLIGVGADLWV, and NGDTPLHVCLEYGSISCMKMLLNEGEVSLDD. Positions 259–302 are disordered; that stretch reads STHTTSGNGGNRRSSITNPVFNPRKPTLSTDSFSSSSNSSSRLR. Residues 260-278 are compositionally biased toward polar residues; it reads THTTSGNGGNRRSSITNPV. The segment covering 285–302 has biased composition (low complexity); that stretch reads TLSTDSFSSSSNSSSRLR. Serine 315 and serine 350 each carry phosphoserine. Residues 350 to 359 show a composition bias toward polar residues; that stretch reads SNDNVRGDSQ. The segment at 350–392 is disordered; that stretch reads SNDNVRGDSQTATINDDGGGGNGGDATIGMGLRKDPDDENENK. A compositionally biased stretch (gly residues) spans 366–375; the sequence is DGGGGNGGDA. Over residues 381–392 the composition is skewed to basic and acidic residues; the sequence is LRKDPDDENENK.

The target of rapamycin complex 2 (TORC2) is composed of at least AVO1, AVO2, BIT61, LST8, TOR2 and TSC11. TORC2 forms a homodimer. Contrary to TORC1, TORC2 does not bind to and is not sensitive to FKBP-rapamycin. AVO2 is peripherally associated to AVO1 and TSC11.

The protein localises to the cell membrane. Its subcellular location is the vacuole membrane. Its function is as follows. Component of TORC2, which regulates cell cycle-dependent polarization of the actin-cytoskeleton and cell wall integrity. TORC2 controls polarity of the actin cytoskeleton, which is required for orienting the secretory pathway toward discrete growth sites, via the RHO1/PKC1/MAPK cell integrity pathway. This is Target of rapamycin complex 2 subunit AVO2 (AVO2) from Saccharomyces cerevisiae (strain ATCC 204508 / S288c) (Baker's yeast).